The following is a 179-amino-acid chain: Natural killer cells antigen CD94 (179 aa).

At 1–10 the chain is on the cytoplasmic side; that stretch reads MAVFKTTLWR. Residues 11–31 traverse the membrane as a helical; Signal-anchor for type II membrane protein segment; it reads LISGTLGIICLSLMATLGILL. At 32–179 the chain is on the extracellular side; sequence KNSFTKLSIE…NRYICKQQLI (148 aa). Disulfide bonds link cysteine 58-cysteine 70 and cysteine 61-cysteine 72. Residues 68-175 form the C-type lectin domain; that stretch reads YRCNCYFISS…CEDKNRYICK (108 aa). N-linked (GlcNAc...) asparagine glycosylation is found at asparagine 83 and asparagine 132. Cystine bridges form between cysteine 89/cysteine 174 and cysteine 152/cysteine 166.

In terms of assembly, can form disulfide-bonded heterodimer with NKG2 family members KLRC1 and KLRC2. KLRD1-KLRC1 heterodimer interacts with peptide-bound MHC-E-B2M heterotrimeric complex. KLRD1 plays a prominent role in directly interacting with MHC-E. KLRD1-KLRC1 interacts with much higher affinity with peptide-bound MHC-E-B2M than KLRD1-KLRC2. Interacts with the adapter protein TYROBP/DAP12; this interaction is required for cell surface expression and cell activation. In terms of tissue distribution, natural killer cells.

The protein resides in the cell membrane. Functionally, immune receptor involved in self-nonself discrimination. In complex with KLRC1 or KLRC2 on cytotoxic and regulatory lymphocyte subsets, recognizes non-classical major histocompatibility (MHC) class Ib molecule MHC-E loaded with self-peptides derived from the signal sequence of classical MHC class Ia and non-classical MHC class Ib molecules. Enables cytotoxic cells to monitor the expression of MHC class I molecules in healthy cells and to tolerate self. Primarily functions as a ligand binding subunit as it lacks the capacity to signal. In terms of biological role, KLRD1-KLRC1 acts as an immune inhibitory receptor. Key inhibitory receptor on natural killer (NK) cells that regulates their activation and effector functions. Dominantly counteracts T cell receptor signaling on a subset of memory/effector CD8-positive T cells as part of an antigen-driven response to avoid autoimmunity. On intraepithelial CD8-positive gamma-delta regulatory T cells triggers TGFB1 secretion, which in turn limits the cytotoxic programming of intraepithelial CD8-positive alpha-beta T cells, distinguishing harmless from pathogenic antigens. In MHC-E-rich tumor microenvironment, acts as an immune inhibitory checkpoint and may contribute to progressive loss of effector functions of NK cells and tumor-specific T cells, a state known as cell exhaustion. Upon MHC-E-peptide binding, transmits intracellular signals through KLRC1 immunoreceptor tyrosine-based inhibition motifs (ITIMs) by recruiting INPP5D/SHIP-1 and INPPL1/SHIP-2 tyrosine phosphatases to ITIMs, and ultimately opposing signals transmitted by activating receptors through dephosphorylation of proximal signaling molecules. Its function is as follows. KLRD1-KLRC2 acts as an immune activating receptor. On cytotoxic lymphocyte subsets recognizes MHC-E loaded with signal sequence-derived peptides from non-classical MHC class Ib MHC-G molecules, likely playing a role in the generation and effector functions of adaptive NK cells and in maternal-fetal tolerance during pregnancy. Regulates the effector functions of terminally differentiated cytotoxic lymphocyte subsets, and in particular may play a role in adaptive NK cell response to viral infection. Upon MHC-E-peptide binding, transmits intracellular signals via the adapter protein TYROBP/DAP12, triggering the phosphorylation of proximal signaling molecules and cell activation. This is Natural killer cells antigen CD94 (KLRD1) from Pan troglodytes (Chimpanzee).